The primary structure comprises 616 residues: Chaperone protein HtpG (616 aa).

An a; substrate-binding region spans residues 1 to 333 (MKKQFDTEVN…CQDLPLNVSR (333 aa)). The interval 334–542 (EILQQNKILS…SNDPTYQMQK (209 aa)) is b. Positions 543–616 (IMLSMGQEVK…INEFLEKELL (74 aa)) are c.

This sequence belongs to the heat shock protein 90 family. Homodimer.

The protein resides in the cytoplasm. In terms of biological role, molecular chaperone. Has ATPase activity. In Borrelia garinii subsp. bavariensis (strain ATCC BAA-2496 / DSM 23469 / PBi) (Borreliella bavariensis), this protein is Chaperone protein HtpG.